Consider the following 94-residue polypeptide: Ammonia regulation of amino acid uptake protein (94 aa).

2 repeats span residues 48 to 57 (HHQIRRRTHQ) and 58 to 67 (HHQIRRRTHQ).

In terms of biological role, involved in ammonia regulation of the GAP1 permease. This is Ammonia regulation of amino acid uptake protein (AUA1) from Saccharomyces cerevisiae (strain ATCC 204508 / S288c) (Baker's yeast).